The sequence spans 529 residues: Peptide chain release factor 3 (529 aa).

A tr-type G domain is found at 11 to 280 (KKRRTFAIIS…GLVEWAPAPL (270 aa)). GTP is bound by residues 20 to 27 (SHPDAGKT), 88 to 92 (DTPGH), and 142 to 145 (NKLD).

The protein belongs to the TRAFAC class translation factor GTPase superfamily. Classic translation factor GTPase family. PrfC subfamily.

The protein resides in the cytoplasm. Functionally, increases the formation of ribosomal termination complexes and stimulates activities of RF-1 and RF-2. It binds guanine nucleotides and has strong preference for UGA stop codons. It may interact directly with the ribosome. The stimulation of RF-1 and RF-2 is significantly reduced by GTP and GDP, but not by GMP. This Alteromonas mediterranea (strain DSM 17117 / CIP 110805 / LMG 28347 / Deep ecotype) protein is Peptide chain release factor 3.